Reading from the N-terminus, the 60-residue chain is Cytotoxin sagitoxin (60 aa).

4 cysteine pairs are disulfide-bonded: cysteine 3–cysteine 21, cysteine 14–cysteine 38, cysteine 42–cysteine 53, and cysteine 54–cysteine 59.

This sequence belongs to the three-finger toxin family. Short-chain subfamily. Type IA cytotoxin sub-subfamily. Monomer in solution; Homodimer and oligomer (homohexamer) in the presence of negatively charged lipids forming a pore with a size ranging between 20 and 30 Angstroms. Expressed by the venom gland.

It localises to the secreted. It is found in the target cell membrane. Its function is as follows. Shows cytolytic activity on many different cells by forming pore in lipid membranes. In vivo, increases heart rate or kill the animal by cardiac arrest. In addition, it binds to heparin with high affinity, interacts with Kv channel-interacting protein 1 (KCNIP1) in a calcium-independent manner, and binds to integrin alpha-V/beta-3 (ITGAV/ITGB3) with moderate affinity. The protein is Cytotoxin sagitoxin of Naja sagittifera (Andaman cobra).